We begin with the raw amino-acid sequence, 383 residues long: Probable cell wall hydrolase LytN (383 aa).

The first 49 residues, 1-49, serve as a signal peptide directing secretion; it reads MFIYYCKECSIMNKQQSKVRYSIRKVSIGILSISIGMFLALGMSNKAYA. Positions 175–219 constitute a LysM domain; sequence QIYTVKKGDTLSAIALKYKTTVSNIQNTNNIANPNLIFIGQKLKV. The 138-residue stretch at 241-378 folds into the Peptidase C51 domain; it reads NSSTLNYLKT…NYENDMIFIR (138 aa).

It is found in the secreted. Probably involved in peptidoglycan hydrolysis. In Staphylococcus aureus (strain Mu50 / ATCC 700699), this protein is Probable cell wall hydrolase LytN (lytN).